The sequence spans 557 residues: Elongator complex protein 3 (557 aa).

The region spanning 91–381 (RTASGIAVVA…YRVQRDIPMP (291 aa)) is the Radical SAM core domain. Positions 108, 118, and 121 each coordinate [4Fe-4S] cluster. Acetyl-CoA is bound at residue Lys173. Residues 405–557 (TTCRDVRTRE…LDGPYMSKRI (153 aa)) enclose the N-acetyltransferase domain. A Glycyl lysine isopeptide (Lys-Gly) (interchain with G-Cter in ubiquitin) cross-link involves residue Lys453. Acetyl-CoA-binding positions include 485-488 (ELHV), 508-510 (FGT), and Tyr541.

The protein belongs to the ELP3 family. Component of the elongator complex which consists of ELP1/IKI3, ELP2, ELP3, ELP4, ELP5/IKI1 and ELP6. The elongator complex is composed of two copies of the Elp123 subcomplex (composed of ELP1/IKI3, ELP2 and ELP3) and two copies of the Elp456 subcomplex (composed of ELP4, ELP5/IKI1 and ELP6). The Elp123 subcomplex forms a two-lobed scaffold, which binds the Elp456 subcomplex asymmetrically. In each lobe, ELP2 is tightly sandwiched between ELP1/IKI3 and ELP3. The Elp123 subcomplex binds tRNA through ELP1/IKI3 and ELP3 and can bind 2 tRNAs simultaneously. tRNA-binding induces conformational rearrangements which precisely position the targeted anticodon base in the active site. ELP3 interacts with KTI11/DPH3. ELP3 interacts with KTI12. The Elp456 subcomplex binds tRNA and has ATPase activity. [4Fe-4S] cluster serves as cofactor.

It is found in the cytoplasm. It localises to the nucleus. The enzyme catalyses uridine(34) in tRNA + acetyl-CoA + S-adenosyl-L-methionine + H2O = 5-(carboxymethyl)uridine(34) in tRNA + 5'-deoxyadenosine + L-methionine + CoA + 2 H(+). The protein operates within tRNA modification; 5-methoxycarbonylmethyl-2-thiouridine-tRNA biosynthesis. Catalytic tRNA acetyltransferase subunit of the elongator complex which is required for multiple tRNA modifications, including mcm5U (5-methoxycarbonylmethyl uridine), mcm5s2U (5-methoxycarbonylmethyl-2-thiouridine), and ncm5U (5-carbamoylmethyl uridine). In the elongator complex, acts as a tRNA uridine(34) acetyltransferase, which mediates formation of carboxymethyluridine in the wobble base at position 34 in tRNAs. The complex functions as a gamma-toxin target (TOT); disruption of the complex confers resistance to Kluyveromyces lactis toxin zymocin (pGKL1 killer toxin). May also be involved in sensitivity to Pichia inositovora toxin. Independently, ELP3 may be involved in polarized exocytosis. The polypeptide is Elongator complex protein 3 (Saccharomyces cerevisiae (strain ATCC 204508 / S288c) (Baker's yeast)).